A 115-amino-acid polypeptide reads, in one-letter code: Parathyroid hormone (115 aa).

An N-terminal signal peptide occupies residues 1–25 (MMSASTMAKVMILMLAVCLLTQADG). Residues 26-31 (KPVKKR) constitute a propeptide that is removed on maturation. An important for receptor binding region spans residues 51–69 (RMQWLRKKLQDVHNFVSLG). A disordered region spans residues 76–101 (EGSYQRPTKKEENVLVDGNSKSLGEG).

The protein belongs to the parathyroid hormone family. Interacts with PTH1R (via N-terminal extracellular domain). Hypothalamus and parathyroid gland.

The protein localises to the secreted. Parathyroid hormone elevates calcium level by dissolving the salts in bone and preventing their renal excretion. Acts by binding to its receptor, PTH1R, activating G protein-coupled receptor signaling. Stimulates [1-14C]-2-deoxy-D-glucose (2DG) transport and glycogen synthesis in osteoblastic cells. The protein is Parathyroid hormone (Pth) of Rattus norvegicus (Rat).